The following is a 637-amino-acid chain: MDLASRDSEAETVEQSSHSGAEQHSTKVLMLGALGVVYGDIGTSPIYAFREALHASPGIDTRAQVLGVLSLIVWALTIIVTIKYVAFVLRADNKGEGGTLSLMSLARTAYPKGARLILAIGLCGAALFFGDSIITPAISVLSAVEGLRVVTPTLDPYVVPITLLILAILFSVQRFGTGKVAAVFGPVTALWFLAIGVAGLYHLLDDPSILLAINPYYAVTYLASTPTAAFVTVGAVFLAVTGAEALYVDLGHFGRKPIVLAWFSVVFPCLLLNYFGQGAFVLANGGRPTNPFFQMLPDWALMPMVGLATAATVIASQAVISGAFSLTRQAVQLNLLPRIEVQHTSEMQLGQIYMPRINLLVALGVMLLVVGFGSSSSLASAYGISVTGEMLMTTILLFVVMRKLWKWRLAVALPLTLLFGIIDSGFFLANIVKIFEGGWVSITVACLMGLIMWTWIRGTRYLFDKTRRNEIPLDFLAANLLKKKPHLVPGTAVFLTSDPLSAPTALMHSLKHYKVLHEQNVILSVVTAPQPVVSDSDRVKMETVNDLFMRVTLTFGYMEQPNIPRALAICRKRGWKFDIMTTSFFLSRRSLKASPNSGMPVWQDRLFIGLARTAADATEYFQIPTGRVVEIGTQVAI.

The disordered stretch occupies residues 1-21 (MDLASRDSEAETVEQSSHSGA). Transmembrane regions (helical) follow at residues 29–49 (LMLG…IYAF), 68–88 (VLSL…VAFV), 116–136 (LILA…IITP), 150–170 (VTPT…AILF), 180–200 (VAAV…VAGL), 228–248 (AAFV…ALYV), 258–278 (IVLA…FGQG), 300–320 (ALMP…QAVI), 359–379 (LLVA…SSLA), 381–401 (AYGI…FVVM), 409–429 (LAVA…FFLA), and 434–454 (IFEG…IMWT).

It belongs to the HAK/KUP transporter (TC 2.A.72) family.

Its subcellular location is the cell inner membrane. The enzyme catalyses K(+)(in) + H(+)(in) = K(+)(out) + H(+)(out). In terms of biological role, transport of potassium into the cell. Likely operates as a K(+):H(+) symporter. The sequence is that of Probable potassium transport system protein Kup 2 from Mesorhizobium japonicum (strain LMG 29417 / CECT 9101 / MAFF 303099) (Mesorhizobium loti (strain MAFF 303099)).